The chain runs to 90 residues: MALDQEVKAAIIAKYGKKDGDTGSSEVQIALLSEQIKILTEHLKVFKKDHSSRLGLLKMVGKRKRLLAYLKRTDYARFTDIVNSLGIRAK.

It belongs to the universal ribosomal protein uS15 family. As to quaternary structure, part of the 30S ribosomal subunit. Forms a bridge to the 50S subunit in the 70S ribosome, contacting the 23S rRNA.

Functionally, one of the primary rRNA binding proteins, it binds directly to 16S rRNA where it helps nucleate assembly of the platform of the 30S subunit by binding and bridging several RNA helices of the 16S rRNA. Its function is as follows. Forms an intersubunit bridge (bridge B4) with the 23S rRNA of the 50S subunit in the ribosome. This is Small ribosomal subunit protein uS15 from Aliarcobacter butzleri (strain RM4018) (Arcobacter butzleri).